A 90-amino-acid chain; its full sequence is ATP-dependent Clp protease adapter protein ClpS (90 aa).

The protein belongs to the ClpS family. As to quaternary structure, binds to the N-terminal domain of the chaperone ClpA.

Functionally, involved in the modulation of the specificity of the ClpAP-mediated ATP-dependent protein degradation. This chain is ATP-dependent Clp protease adapter protein ClpS, found in Helicobacter pylori (strain J99 / ATCC 700824) (Campylobacter pylori J99).